Consider the following 147-residue polypeptide: UPF0306 protein YhbP (147 aa).

It belongs to the UPF0306 family.

This is UPF0306 protein YhbP from Escherichia fergusonii (strain ATCC 35469 / DSM 13698 / CCUG 18766 / IAM 14443 / JCM 21226 / LMG 7866 / NBRC 102419 / NCTC 12128 / CDC 0568-73).